The following is a 140-amino-acid chain: Virion protein 5 (140 aa).

The protein resides in the virion. The chain is Virion protein 5 from Enterococcus faecalis (Streptococcus faecalis).